Reading from the N-terminus, the 430-residue chain is Enolase (430 aa).

Glutamine 163 lines the (2R)-2-phosphoglycerate pocket. Residue glutamate 205 is the Proton donor of the active site. Positions 242, 288, and 315 each coordinate Mg(2+). 4 residues coordinate (2R)-2-phosphoglycerate: lysine 340, arginine 369, serine 370, and lysine 391. The active-site Proton acceptor is the lysine 340.

Belongs to the enolase family. Requires Mg(2+) as cofactor.

It localises to the cytoplasm. The protein localises to the secreted. Its subcellular location is the cell surface. The catalysed reaction is (2R)-2-phosphoglycerate = phosphoenolpyruvate + H2O. It participates in carbohydrate degradation; glycolysis; pyruvate from D-glyceraldehyde 3-phosphate: step 4/5. Functionally, catalyzes the reversible conversion of 2-phosphoglycerate (2-PG) into phosphoenolpyruvate (PEP). It is essential for the degradation of carbohydrates via glycolysis. The chain is Enolase from Aster yellows witches'-broom phytoplasma (strain AYWB).